The sequence spans 351 residues: tRNA N6-adenosine threonylcarbamoyltransferase (351 aa).

Residues His-111 and His-115 each coordinate Fe cation. Residues Leu-134–Gly-138, Asp-167, Gly-180, and Asn-276 contribute to the substrate site. Asp-304 contacts Fe cation.

The protein belongs to the KAE1 / TsaD family. The cofactor is Fe(2+).

The protein resides in the cytoplasm. The catalysed reaction is L-threonylcarbamoyladenylate + adenosine(37) in tRNA = N(6)-L-threonylcarbamoyladenosine(37) in tRNA + AMP + H(+). Its function is as follows. Required for the formation of a threonylcarbamoyl group on adenosine at position 37 (t(6)A37) in tRNAs that read codons beginning with adenine. Is involved in the transfer of the threonylcarbamoyl moiety of threonylcarbamoyl-AMP (TC-AMP) to the N6 group of A37, together with TsaE and TsaB. TsaD likely plays a direct catalytic role in this reaction. In Marinobacter nauticus (strain ATCC 700491 / DSM 11845 / VT8) (Marinobacter aquaeolei), this protein is tRNA N6-adenosine threonylcarbamoyltransferase.